We begin with the raw amino-acid sequence, 199 residues long: N-(5'-phosphoribosyl)anthranilate isomerase (199 aa).

It belongs to the TrpF family.

The catalysed reaction is N-(5-phospho-beta-D-ribosyl)anthranilate = 1-(2-carboxyphenylamino)-1-deoxy-D-ribulose 5-phosphate. Its pathway is amino-acid biosynthesis; L-tryptophan biosynthesis; L-tryptophan from chorismate: step 3/5. In Lacticaseibacillus paracasei (strain ATCC 334 / BCRC 17002 / CCUG 31169 / CIP 107868 / KCTC 3260 / NRRL B-441) (Lactobacillus paracasei), this protein is N-(5'-phosphoribosyl)anthranilate isomerase.